A 1407-amino-acid polypeptide reads, in one-letter code: MKDLLKFLKAQTKTEEFDAIKIALASPDMIRSWSFGEVKKPETINYRTFKPERDGLFCARIFGPVKDYECLCGKYKRLKHRGVICEKCGVEVTQTKVRRERMGHIELASPTAHIWFLKSLPSRIGLLLDMPLRDIERVLYFESYVVIEGGMTNLERQQILTEEQYLDALEEFGDEFDAKMGAEAIQALLKSMDLEQECEQLREELNETNSETKRKKLTKRIKLLEAFVQSGNKPEWMILTVLPVLPPDLRPLVPLDGGRFATSDLNDLYRRVINRNNRLKRLLDLAAPDIIVRNEKRMLQEAVDALLDNGRRGRAITGSNKRPLKSLADMIKGKQGRFRQNLLGKRVDYSGRSVITVGPYLRLHQCGLPKKMALELFKPFIYGKLELRGLATTIKAAKKMVEREXAVVWDILDEVIREHPVLLNRAPTLHRLGIQAFEPVLIEGKAIQLHPLVCAAYNADFDGDQMAVHVPLTLEAQLEARALMMSTNNILSPANGEPIIVPSQDVVLGLYYMTRDCVNAKGEGMVLTGPKEAERLYRSGLASLHARVKVRITEYEKDANGELXAKTSLXDTTVGRAILWMIVPKGLPYTIVNQALGKKAISKMLNTCYRILGLKPTVIFADQIMYTGFAYAARSGASVGIDDMVIPEKKHEIISEAEAEVAEIQEQFQSGLVTAGERYNKVIDIWAAANDRVSKAMMDNLQTETVINRDGQEEKQVSFNSIYMMADSGARGSAAQIRQLAGMRGLMAKPDGSIIETPITANFREGLNVLQYFISTHGARKGLADTALKTANSGYLTRRLVDVAQDLVVTEDDCGTHEGIMMTPVIEGGDVKEPLRDRVLGRVTAEDVLKPGTADILVPRNTLLHEQWCDLLEENSVDAVKVRSVVSCDTDFGVCAHCYGRDLARGHIINKGEAIGVIAAQSIGEPGTQLTMRTFHIGGAASRAAAESSIQVKNKGSIKLSNVKSVVNSSGKLVITSRNTELKLIDEFGRTKESYKVPYGAVLAKGDGEQVAGGETVANWDPHTMPVITEVSGFVRFTDMIDGQTITRQTDELTGLSSLVVLDSAERTAGGKDLRPALKIVDAQGNDVLIPGTDMPAQYFLPGKAIVQLEDGVQISSGDTLARIPQESGGTKDITGGLPRVADLFEARRPKEPAILAEISGIVSFGKETKGKRRLVITPVDGSDPYEEMIPKWRQLNVFEGERVERGDVISDGPEAPHDILRLRGVHAVTRYIVNEVQDVYRLQGVKINDKHIEVIVRQMLRKATIVNAGSSDFLEGEQVEYSRVKIANRELEANGKVGATYSRDLLGITKASLATESFISAASFQETTRVLTEAAVAGKRDELRGLKENVIVGRLIPAGTGYAYHQDRMRRRAAGEAPAAPQVTAEDASASLAELLNAGLGGSDNE.

Zn(2+) contacts are provided by Cys70, Cys72, Cys85, and Cys88. The Mg(2+) site is built by Asp460, Asp462, and Asp464. Residues Cys814, Cys888, Cys895, and Cys898 each contribute to the Zn(2+) site. Lys972 carries the N6-acetyllysine modification.

Belongs to the RNA polymerase beta' chain family. The RNAP catalytic core consists of 2 alpha, 1 beta, 1 beta' and 1 omega subunit. When a sigma factor is associated with the core the holoenzyme is formed, which can initiate transcription. Requires Mg(2+) as cofactor. It depends on Zn(2+) as a cofactor.

The enzyme catalyses RNA(n) + a ribonucleoside 5'-triphosphate = RNA(n+1) + diphosphate. In terms of biological role, DNA-dependent RNA polymerase catalyzes the transcription of DNA into RNA using the four ribonucleoside triphosphates as substrates. The sequence is that of DNA-directed RNA polymerase subunit beta' from Escherichia coli O6:H1 (strain CFT073 / ATCC 700928 / UPEC).